The primary structure comprises 418 residues: Phosphoglycerate kinase (418 aa).

The (2R)-3-phosphoglycerate site is built by V23, D24, F25, N26, Q39, R40, S63, H64, G66, R67, L122, R123, H170, and R171. G214 contributes to the ADP binding site. G214 is a binding site for CDP. A215 and K216 together coordinate AMP. ATP is bound at residue A215. Position 215 (A215) interacts with Mg(2+). Residue D219 coordinates CDP. D219 is a Mg(2+) binding site. K220 is a binding site for AMP. K220 serves as a coordination point for ATP. Position 238 (G238) interacts with ADP. Residue G238 coordinates CDP. Residues G239 and G313 each contribute to the AMP site. Residues G239 and G313 each coordinate ATP. Residues G338, A340, and F343 each coordinate CDP. F343 is a binding site for ADP. Position 344 (E344) interacts with AMP. 3 residues coordinate ATP: E344, D375, and T376. D375 is a binding site for Mg(2+).

It belongs to the phosphoglycerate kinase family. As to quaternary structure, monomer. Requires Mg(2+) as cofactor.

The protein resides in the cytoplasm. The protein localises to the mitochondrion. The enzyme catalyses (2R)-3-phosphoglycerate + ATP = (2R)-3-phospho-glyceroyl phosphate + ADP. Its pathway is carbohydrate degradation; glycolysis; pyruvate from D-glyceraldehyde 3-phosphate: step 2/5. Functionally, catalyzes one of the two ATP producing reactions in the glycolytic pathway via the reversible conversion of 1,3-diphosphoglycerate to 3-phosphoglycerate. Both L- and D- forms of purine and pyrimidine nucleotides can be used as substrates, but the activity is much lower on pyrimidines. Negatively regulates the biosynthesis of acetyl-CoA from pyruvate in the mitochondrion. The polypeptide is Phosphoglycerate kinase (pgk-1) (Neurospora crassa (strain ATCC 24698 / 74-OR23-1A / CBS 708.71 / DSM 1257 / FGSC 987)).